The following is a 105-amino-acid chain: Large ribosomal subunit protein uL24 (105 aa).

The protein belongs to the universal ribosomal protein uL24 family. Part of the 50S ribosomal subunit.

Its function is as follows. One of two assembly initiator proteins, it binds directly to the 5'-end of the 23S rRNA, where it nucleates assembly of the 50S subunit. In terms of biological role, one of the proteins that surrounds the polypeptide exit tunnel on the outside of the subunit. The protein is Large ribosomal subunit protein uL24 of Methylobacterium sp. (strain 4-46).